Reading from the N-terminus, the 300-residue chain is Arginine/serine-rich protein 1 (300 aa).

Residues 1–142 (MSSAAVSKYV…RGRSHHRRSY (142 aa)) are disordered. Ser-17 carries the post-translational modification Phosphoserine. Residues 23–36 (SPSTSGSGRSSRLS) show a composition bias toward low complexity. Residues 37 to 104 (SRSRSRSSSR…RSRSRSRGHR (68 aa)) are compositionally biased toward basic residues. Positions 105-115 (YYRDSRYEQPR) are enriched in basic and acidic residues. The span at 116 to 125 (RYYQSPSPYR) shows a compositional bias: low complexity. 2 positions are modified to phosphoserine: Ser-120 and Ser-122. Residues 126 to 141 (SRSRSRSRGRSHHRRS) are compositionally biased toward basic residues. Residue Arg-147 is modified to Omega-N-methylarginine. Positions 222–300 (QGAVSCSGPK…KSPYGLWIPV (79 aa)) are disordered. A compositionally biased stretch (basic and acidic residues) spans 268 to 277 (PLEKTTKAAV). Ser-284 is subject to Phosphoserine.

Belongs to the RSRP family. In terms of processing, phosphorylated. Phosphorylation at Ser-120 and Ser-122 mediates the interaction with spliceosome proteins.

The protein localises to the nucleus. In terms of biological role, probably acts as a spliceosomal factor that contributes to spliceosome assembly and regulates the isoform switching of proteins such as PARP6. The protein is Arginine/serine-rich protein 1 (Rsrp1) of Rattus norvegicus (Rat).